A 43-amino-acid chain; its full sequence is Cytochrome b559 subunit beta (43 aa).

The chain crosses the membrane as a helical span at residues 18–34 (WLAVHTLAVPSVFFLGA). H22 serves as a coordination point for heme.

Belongs to the PsbE/PsbF family. In terms of assembly, heterodimer of an alpha subunit and a beta subunit. PSII is composed of 1 copy each of membrane proteins PsbA, PsbB, PsbC, PsbD, PsbE, PsbF, PsbH, PsbI, PsbJ, PsbK, PsbL, PsbM, PsbT, PsbX, PsbY, PsbZ, Psb30/Ycf12, peripheral proteins PsbO, CyanoQ (PsbQ), PsbU, PsbV and a large number of cofactors. It forms dimeric complexes. Requires heme b as cofactor.

It localises to the cellular thylakoid membrane. This b-type cytochrome is tightly associated with the reaction center of photosystem II (PSII). PSII is a light-driven water:plastoquinone oxidoreductase that uses light energy to abstract electrons from H(2)O, generating O(2) and a proton gradient subsequently used for ATP formation. It consists of a core antenna complex that captures photons, and an electron transfer chain that converts photonic excitation into a charge separation. This chain is Cytochrome b559 subunit beta, found in Picosynechococcus sp. (strain ATCC 27264 / PCC 7002 / PR-6) (Agmenellum quadruplicatum).